The sequence spans 305 residues: Tyrosine recombinase XerC (305 aa).

The 92-residue stretch at 4–95 (TSIQELIDKW…AVKNFYRFLE (92 aa)) folds into the Core-binding (CB) domain. Positions 116–298 (LLPKALSEDD…SIKHLEAVYT (183 aa)) constitute a Tyr recombinase domain. Active-site residues include R159, K182, H250, R253, and H276. The O-(3'-phospho-DNA)-tyrosine intermediate role is filled by Y285.

It belongs to the 'phage' integrase family. XerC subfamily. As to quaternary structure, forms a cyclic heterotetrameric complex composed of two molecules of XerC and two molecules of XerD.

The protein resides in the cytoplasm. Functionally, site-specific tyrosine recombinase, which acts by catalyzing the cutting and rejoining of the recombining DNA molecules. The XerC-XerD complex is essential to convert dimers of the bacterial chromosome into monomers to permit their segregation at cell division. It also contributes to the segregational stability of plasmids. In Rickettsia felis (strain ATCC VR-1525 / URRWXCal2) (Rickettsia azadi), this protein is Tyrosine recombinase XerC.